The sequence spans 216 residues: Cytidylate kinase (216 aa).

7 to 15 (GPAASGKGT) is an ATP binding site.

The protein belongs to the cytidylate kinase family. Type 1 subfamily.

It is found in the cytoplasm. It carries out the reaction CMP + ATP = CDP + ADP. The enzyme catalyses dCMP + ATP = dCDP + ADP. This is Cytidylate kinase from Methylocella silvestris (strain DSM 15510 / CIP 108128 / LMG 27833 / NCIMB 13906 / BL2).